A 402-amino-acid polypeptide reads, in one-letter code: Arginine deiminase (402 aa).

Cysteine 392 serves as the catalytic Amidino-cysteine intermediate.

The protein belongs to the arginine deiminase family.

The protein localises to the cytoplasm. The enzyme catalyses L-arginine + H2O = L-citrulline + NH4(+). It functions in the pathway amino-acid degradation; L-arginine degradation via ADI pathway; carbamoyl phosphate from L-arginine: step 1/2. This chain is Arginine deiminase (arcA), found in Mycobacterium bovis (strain ATCC BAA-935 / AF2122/97).